A 162-amino-acid polypeptide reads, in one-letter code: uncharacterized protein (162 aa).

The HTH asnC-type domain maps to 6-71 (LDDLDRAILK…PIKPRKLALV (66 aa)). Residues 25-44 (IAEISNQLKKPESTVHFRIK) constitute a DNA-binding region (H-T-H motif).

This is an uncharacterized protein from Pyrococcus abyssi (strain GE5 / Orsay).